The primary structure comprises 45 residues: Putative potassium channel blocker (45 aa).

Expressed by the venom gland.

The protein localises to the secreted. Functionally, inhibits potassium channels. The protein is Putative potassium channel blocker of Hottentotta tamulus (Eastern Indian scorpion).